A 487-amino-acid polypeptide reads, in one-letter code: Glutamyl-tRNA(Gln) amidotransferase subunit A (487 aa).

Residues K77 and S152 each act as charge relay system in the active site. The Acyl-ester intermediate role is filled by S176.

The protein belongs to the amidase family. GatA subfamily. Heterotrimer of A, B and C subunits.

The enzyme catalyses L-glutamyl-tRNA(Gln) + L-glutamine + ATP + H2O = L-glutaminyl-tRNA(Gln) + L-glutamate + ADP + phosphate + H(+). In terms of biological role, allows the formation of correctly charged Gln-tRNA(Gln) through the transamidation of misacylated Glu-tRNA(Gln) in organisms which lack glutaminyl-tRNA synthetase. The reaction takes place in the presence of glutamine and ATP through an activated gamma-phospho-Glu-tRNA(Gln). This chain is Glutamyl-tRNA(Gln) amidotransferase subunit A, found in Ligilactobacillus salivarius (strain UCC118) (Lactobacillus salivarius).